The sequence spans 254 residues: D-aminoacyl-tRNA deacylase (254 aa).

Belongs to the DtdA deacylase family. Monomer. Requires Zn(2+) as cofactor.

The catalysed reaction is a D-aminoacyl-tRNA + H2O = a tRNA + a D-alpha-amino acid + H(+). It catalyses the reaction glycyl-tRNA(Ala) + H2O = tRNA(Ala) + glycine + H(+). Functionally, D-aminoacyl-tRNA deacylase with broad substrate specificity. By recycling D-aminoacyl-tRNA to D-amino acids and free tRNA molecules, this enzyme counteracts the toxicity associated with the formation of D-aminoacyl-tRNA entities in vivo. In Methanococcus vannielii (strain ATCC 35089 / DSM 1224 / JCM 13029 / OCM 148 / SB), this protein is D-aminoacyl-tRNA deacylase.